The following is a 176-amino-acid chain: Large ribosomal subunit protein uL6 (176 aa).

The span at 151-170 shows a compositional bias: basic and acidic residues; it reads RPPEPYKGKGVRYADEQVRR. Positions 151-176 are disordered; the sequence is RPPEPYKGKGVRYADEQVRRKEAKKK.

The protein belongs to the universal ribosomal protein uL6 family. As to quaternary structure, part of the 50S ribosomal subunit.

In terms of biological role, this protein binds to the 23S rRNA, and is important in its secondary structure. It is located near the subunit interface in the base of the L7/L12 stalk, and near the tRNA binding site of the peptidyltransferase center. This chain is Large ribosomal subunit protein uL6, found in Shewanella pealeana (strain ATCC 700345 / ANG-SQ1).